The chain runs to 198 residues: Virion membrane protein A17 precursor homolog (198 aa).

Residues 1-55 (MDNNYLNYYNVFEEFDAGAGIKEKELFTEEQQLSFLPKKGLGNGGFDGVERLYSN) lie on the Virion surface side of the membrane. Residues 56 to 76 (IINNNDIKSLLALIMLVFAIN) form a helical membrane-spanning segment. At 77 to 145 (TNSLVALIFI…TSKISKGFKR (69 aa)) the chain is on the intravirion side. The chain crosses the membrane as a helical span at residues 146–166 (AIDVVLLVILGFYIVKIYGID). The Virion surface portion of the chain corresponds to 167-198 (RQISIPSRRYCRQMSGPSSLENLNAFQTHSNY). Tyrosine 198 carries the post-translational modification Phosphotyrosine.

The protein belongs to the chordopoxvirinae A17 family. In terms of assembly, interacts (via N-terminus) with D13 scaffold; this interaction helps D13 to associate with membranes. Interacts with A14. Interacts with A27; this interaction allows A27 to be anchored in the mature virion (MV) membrane. Part of a complex composed of A17, A25, A26 and A27. In terms of processing, the 22 kDa precursor is probably cleaved by the I7 protease during virus maturation. Post-translationally, phosphorylated on tyrosine and threonine. Its phosphorylation state is regulated by the F10 kinase and the H1 phosphatase. Phosphorylation by F10 kinase seems to be required to form the membranes associated with IV.

It is found in the virion membrane. Its function is as follows. Envelope protein which participates in virus morphogenesis. Needed for an early step in viral crescent membrane formation by interacting with D13 scaffold protein. Its interaction with D13 scaffold protein leads to the formation of rigid, crescent-shaped membranes that assemble around the cytoplasmic virus factory. Membrane anchor for the protein A27. A17-A27 virus envelope protein might be involved in fusion or attachment, and can further associate to A26. The chain is Virion membrane protein A17 precursor homolog from Fowlpox virus (strain NVSL) (FPV).